The sequence spans 186 residues: ATP synthase subunit b, chloroplastic (186 aa).

The chain crosses the membrane as a helical span at residues 26-44; the sequence is ILETNLINLGVVIGTLLYF.

This sequence belongs to the ATPase B chain family. F-type ATPases have 2 components, F(1) - the catalytic core - and F(0) - the membrane proton channel. F(1) has five subunits: alpha(3), beta(3), gamma(1), delta(1), epsilon(1). F(0) has four main subunits: a(1), b(1), b'(1) and c(10-14). The alpha and beta chains form an alternating ring which encloses part of the gamma chain. F(1) is attached to F(0) by a central stalk formed by the gamma and epsilon chains, while a peripheral stalk is formed by the delta, b and b' chains.

The protein localises to the plastid. The protein resides in the chloroplast thylakoid membrane. Functionally, f(1)F(0) ATP synthase produces ATP from ADP in the presence of a proton or sodium gradient. F-type ATPases consist of two structural domains, F(1) containing the extramembraneous catalytic core and F(0) containing the membrane proton channel, linked together by a central stalk and a peripheral stalk. During catalysis, ATP synthesis in the catalytic domain of F(1) is coupled via a rotary mechanism of the central stalk subunits to proton translocation. In terms of biological role, component of the F(0) channel, it forms part of the peripheral stalk, linking F(1) to F(0). The protein is ATP synthase subunit b, chloroplastic of Chara vulgaris (Common stonewort).